Reading from the N-terminus, the 264-residue chain is Indolethylamine N-methyltransferase (264 aa).

The residue at position 14 (lysine 14) is an N6-succinyllysine. Residues tyrosine 21, tyrosine 26, 64–65, tyrosine 70, aspartate 86, and asparagine 91 each bind S-adenosyl-L-methionine; that span reads GS. Residue lysine 97 is modified to N6-succinyllysine. S-adenosyl-L-methionine-binding positions include 143–144 and phenylalanine 164; that span reads DV.

Belongs to the class I-like SAM-binding methyltransferase superfamily. NNMT/PNMT/TEMT family. As to quaternary structure, monomer. In terms of tissue distribution, detected in lung and liver (at protein level).

The protein resides in the cytoplasm. The enzyme catalyses a tertiary amine + S-adenosyl-L-methionine = a methylated tertiary amine + S-adenosyl-L-homocysteine + H(+). It carries out the reaction a secondary amine + S-adenosyl-L-methionine = a methylated secondary amine + S-adenosyl-L-homocysteine + H(+). The catalysed reaction is a primary amine + S-adenosyl-L-methionine = a methylated primary amine + S-adenosyl-L-homocysteine + H(+). It catalyses the reaction dimethyl sulfide + S-adenosyl-L-methionine = trimethylsulfonium + S-adenosyl-L-homocysteine. Inhibited by the S-adenosyl-L-methionine analog sinefungin and by the product S-adenosyl-L-homocysteine. Functionally, catalyzes the N-methylation of tryptamine and structurally related compounds. Functions as a thioether S-methyltransferase and is active with a variety of thioethers and the corresponding selenium and tellurium compounds, including 3-methylthiopropionaldehyde, dimethyl selenide, dimethyl telluride, 2-methylthioethylamine, 2-methylthioethanol, methyl-n-propyl sulfide and diethyl sulfide. Plays an important role in the detoxification of selenium compounds. In Mus musculus (Mouse), this protein is Indolethylamine N-methyltransferase (Inmt).